A 225-amino-acid polypeptide reads, in one-letter code: Imidazole glycerol phosphate synthase subunit HisH (225 aa).

One can recognise a Glutamine amidotransferase type-1 domain in the interval T3 to P225. C82 acts as the Nucleophile in catalysis. Residues H205 and E207 contribute to the active site.

As to quaternary structure, heterodimer of HisH and HisF.

It is found in the cytoplasm. The enzyme catalyses 5-[(5-phospho-1-deoxy-D-ribulos-1-ylimino)methylamino]-1-(5-phospho-beta-D-ribosyl)imidazole-4-carboxamide + L-glutamine = D-erythro-1-(imidazol-4-yl)glycerol 3-phosphate + 5-amino-1-(5-phospho-beta-D-ribosyl)imidazole-4-carboxamide + L-glutamate + H(+). The catalysed reaction is L-glutamine + H2O = L-glutamate + NH4(+). It participates in amino-acid biosynthesis; L-histidine biosynthesis; L-histidine from 5-phospho-alpha-D-ribose 1-diphosphate: step 5/9. IGPS catalyzes the conversion of PRFAR and glutamine to IGP, AICAR and glutamate. The HisH subunit catalyzes the hydrolysis of glutamine to glutamate and ammonia as part of the synthesis of IGP and AICAR. The resulting ammonia molecule is channeled to the active site of HisF. The polypeptide is Imidazole glycerol phosphate synthase subunit HisH (Bordetella pertussis (strain Tohama I / ATCC BAA-589 / NCTC 13251)).